Consider the following 203-residue polypeptide: Glycerol-3-phosphate acyltransferase (203 aa).

The next 4 membrane-spanning stretches (helical) occupy residues 4 to 24 (LALIMTMAAYLLGSISSAVLI), 68 to 88 (IPVWGGYFLGIDPIILGVIAI), 117 to 137 (PIGLDLTGLVMLTWLSVAVLF), and 155 to 175 (TWMFKPQYTLPVAMLCCLIVF).

The protein belongs to the PlsY family. As to quaternary structure, probably interacts with PlsX.

The protein resides in the cell inner membrane. The enzyme catalyses an acyl phosphate + sn-glycerol 3-phosphate = a 1-acyl-sn-glycero-3-phosphate + phosphate. It functions in the pathway lipid metabolism; phospholipid metabolism. Its function is as follows. Catalyzes the transfer of an acyl group from acyl-phosphate (acyl-PO(4)) to glycerol-3-phosphate (G3P) to form lysophosphatidic acid (LPA). This enzyme utilizes acyl-phosphate as fatty acyl donor, but not acyl-CoA or acyl-ACP. The chain is Glycerol-3-phosphate acyltransferase from Vibrio campbellii (strain ATCC BAA-1116).